A 318-amino-acid chain; its full sequence is MTYLEFEKPLADLEGKAEELRALARKGEGVDLEKEAAALDRKAEEMLRDLYKQLDPWRKTQVARHPERPHCRDYVEALFTEYTPLAGDRAFGEDHAVMGGLARFKDQPCVVIGHEKGNDTKSRIFHNFGMARPEGYRKAIRLMDVADRFRLPVITLVDTPGAYPGKGAEERGQSEAIARSTEKCLQISVPLVSVVIGEGGSGGAVAFATANRIAMLEHSIYSVISPEGCASILWKDAEKMREAAHALKLTAQDLKKLEVIDRIISEPVGGAQRAPAEAIAAVGEAIAAMLGELAGKKPAELIKDRRQKFLAMGSKALG.

Residues 38-292 (ALDRKAEEML…GEAIAAMLGE (255 aa)) enclose the CoA carboxyltransferase C-terminal domain.

The protein belongs to the AccA family. As to quaternary structure, acetyl-CoA carboxylase is a heterohexamer composed of biotin carboxyl carrier protein (AccB), biotin carboxylase (AccC) and two subunits each of ACCase subunit alpha (AccA) and ACCase subunit beta (AccD).

The protein localises to the cytoplasm. It carries out the reaction N(6)-carboxybiotinyl-L-lysyl-[protein] + acetyl-CoA = N(6)-biotinyl-L-lysyl-[protein] + malonyl-CoA. Its pathway is lipid metabolism; malonyl-CoA biosynthesis; malonyl-CoA from acetyl-CoA: step 1/1. In terms of biological role, component of the acetyl coenzyme A carboxylase (ACC) complex. First, biotin carboxylase catalyzes the carboxylation of biotin on its carrier protein (BCCP) and then the CO(2) group is transferred by the carboxyltransferase to acetyl-CoA to form malonyl-CoA. The polypeptide is Acetyl-coenzyme A carboxylase carboxyl transferase subunit alpha (Paracoccus denitrificans (strain Pd 1222)).